The following is a 795-amino-acid chain: Phenylalanine--tRNA ligase beta subunit (795 aa).

Residues 39-148 form the tRNA-binding domain; it reads AGDFSGVVVG…QNAPVGTNLR (110 aa). In terms of domain architecture, B5 spans 401-476; the sequence is PKLNQVSLRR…RIYGYNSIPN (76 aa). Residues aspartate 454, aspartate 460, glutamate 463, and glutamate 464 each contribute to the Mg(2+) site. One can recognise an FDX-ACB domain in the interval 701 to 794; sequence SRFPANRRDL…LKQRFNAYLR (94 aa).

Belongs to the phenylalanyl-tRNA synthetase beta subunit family. Type 1 subfamily. Tetramer of two alpha and two beta subunits. Mg(2+) serves as cofactor.

The protein localises to the cytoplasm. The catalysed reaction is tRNA(Phe) + L-phenylalanine + ATP = L-phenylalanyl-tRNA(Phe) + AMP + diphosphate + H(+). The sequence is that of Phenylalanine--tRNA ligase beta subunit (pheT) from Pasteurella multocida (strain Pm70).